The primary structure comprises 245 residues: Type III pantothenate kinase (245 aa).

6 to 13 (DVGNTAMK) is an ATP binding site. Substrate-binding positions include Tyr-93 and 100–103 (GVDR). Asp-102 (proton acceptor) is an active-site residue. K(+) is bound at residue Asp-121. An ATP-binding site is contributed by Ser-124. Residue Thr-175 participates in substrate binding.

It belongs to the type III pantothenate kinase family. In terms of assembly, homodimer. It depends on NH4(+) as a cofactor. K(+) serves as cofactor.

The protein localises to the cytoplasm. The enzyme catalyses (R)-pantothenate + ATP = (R)-4'-phosphopantothenate + ADP + H(+). The protein operates within cofactor biosynthesis; coenzyme A biosynthesis; CoA from (R)-pantothenate: step 1/5. In terms of biological role, catalyzes the phosphorylation of pantothenate (Pan), the first step in CoA biosynthesis. This Alcanivorax borkumensis (strain ATCC 700651 / DSM 11573 / NCIMB 13689 / SK2) protein is Type III pantothenate kinase.